A 248-amino-acid chain; its full sequence is Ethylene-responsive transcription factor ERF026 (248 aa).

The AP2/ERF DNA-binding region spans 89–145 (VYRGIRCRSGKWVSEIREPKKTTRVWLGTYPTPEMAAAAYDVAALALKGGDTLLNFP). Residues 225–248 (PPWMGSPPSDDSPENSDGESLWSY) are disordered.

This sequence belongs to the AP2/ERF transcription factor family. ERF subfamily.

The protein resides in the nucleus. In terms of biological role, probably acts as a transcriptional activator. Binds to the GCC-box pathogenesis-related promoter element. May be involved in the regulation of gene expression by stress factors and by components of stress signal transduction pathways. The sequence is that of Ethylene-responsive transcription factor ERF026 (ERF026) from Arabidopsis thaliana (Mouse-ear cress).